Here is a 324-residue protein sequence, read N- to C-terminus: tRNA dimethylallyltransferase (324 aa).

Position 17-24 (17-24 (GPTASGKT)) interacts with ATP. Substrate is bound at residue 19 to 24 (TASGKT). Interaction with substrate tRNA regions lie at residues 42 to 45 (DSAL), 166 to 170 (QRIQR), 251 to 256 (RCVGYR), and 284 to 291 (KRQITWLR).

The protein belongs to the IPP transferase family. In terms of assembly, monomer. Mg(2+) serves as cofactor.

The catalysed reaction is adenosine(37) in tRNA + dimethylallyl diphosphate = N(6)-dimethylallyladenosine(37) in tRNA + diphosphate. Catalyzes the transfer of a dimethylallyl group onto the adenine at position 37 in tRNAs that read codons beginning with uridine, leading to the formation of N6-(dimethylallyl)adenosine (i(6)A). In Burkholderia orbicola (strain MC0-3), this protein is tRNA dimethylallyltransferase.